Reading from the N-terminus, the 75-residue chain is uncharacterized protein (75 aa).

This is an uncharacterized protein from Orgyia pseudotsugata (Douglas-fir tussock moth).